Reading from the N-terminus, the 734-residue chain is Photosystem I P700 chlorophyll a apoprotein A2 (734 aa).

8 helical membrane-spanning segments follow: residues 46 to 69 (IFAS…FHVA), 135 to 158 (LYQG…LHLQ), 175 to 199 (LNHH…HVAI), 273 to 291 (IAHH…GHMY), 330 to 353 (LHFQ…QHMY), 369 to 395 (AALY…IFLI), 417 to 439 (AIIS…LYVH), and 517 to 535 (FLVH…LILV). [4Fe-4S] cluster is bound by residues Cys559 and Cys568. The next 2 membrane-spanning stretches (helical) occupy residues 575-596 (AFYL…YWHW) and 643-665 (LSVW…MFLI). Positions 654, 662, and 670 each coordinate chlorophyll a. Trp671 contacts phylloquinone. A helical membrane pass occupies residues 707–727 (VVGLAHFTVGYFLTYAAFLIA).

This sequence belongs to the PsaA/PsaB family. In terms of assembly, the PsaA/B heterodimer binds the P700 chlorophyll special pair and subsequent electron acceptors. PSI consists of a core antenna complex that captures photons, and an electron transfer chain that converts photonic excitation into a charge separation. The cyanobacterial PSI reaction center is composed of one copy each of PsaA,B,C,D,E,F,I,J,K,L,M and X, and forms trimeric complexes. Requires PSI electron transfer chain: 5 chlorophyll a, 1 chlorophyll a', 2 phylloquinones and 3 4Fe-4S clusters. PSI core antenna: 90 chlorophyll a, 22 carotenoids, 3 phospholipids and 1 galactolipid. P700 is a chlorophyll a/chlorophyll a' dimer, A0 is one or more chlorophyll a, A1 is one or both phylloquinones and FX is a shared 4Fe-4S iron-sulfur center. as cofactor.

Its subcellular location is the cellular thylakoid membrane. The enzyme catalyses reduced [plastocyanin] + hnu + oxidized [2Fe-2S]-[ferredoxin] = oxidized [plastocyanin] + reduced [2Fe-2S]-[ferredoxin]. PsaA and PsaB bind P700, the primary electron donor of photosystem I (PSI), as well as the electron acceptors A0, A1 and FX. PSI is a plastocyanin/cytochrome c6-ferredoxin oxidoreductase, converting photonic excitation into a charge separation, which transfers an electron from the donor P700 chlorophyll pair to the spectroscopically characterized acceptors A0, A1, FX, FA and FB in turn. Oxidized P700 is reduced on the lumenal side of the thylakoid membrane by plastocyanin or cytochrome c6. This Synechococcus elongatus (strain ATCC 33912 / PCC 7942 / FACHB-805) (Anacystis nidulans R2) protein is Photosystem I P700 chlorophyll a apoprotein A2.